The sequence spans 142 residues: Glia maturation factor beta (142 aa).

Position 2 is an N-acetylserine (Ser-2). Positions 4–139 constitute an ADF-H domain; it reads SLVVCDVAED…TEEWLREKLG (136 aa).

It belongs to the actin-binding proteins ADF family. GMF subfamily. In terms of processing, phosphorylated; stimulated by phorbol ester.

Its function is as follows. This protein causes differentiation of brain cells, stimulation of neural regeneration, and inhibition of proliferation of tumor cells. The chain is Glia maturation factor beta (Gmfb) from Rattus norvegicus (Rat).